A 216-amino-acid polypeptide reads, in one-letter code: MVDITAAELRAAEKIFGDRLDLAKRYVEHLATSGTERGLIGPREIPRLWSRHVLNCAVIESEIPQGSRVADVGSGAGLPGLCLAIARPDLELTLIEPLERRVIWLQEVVDDLGLDNVTVMRSRAELAVGHVEADVVTARAVSALTNLAGLTIPLLGGTGEVIAIKGRSAGEEIEKAAKAIRKLGGVETSVLTVGDNLLEEPTTVVRIVVNKPQKKS.

Residues Gly-73, Leu-78, 124–125 (AE), and Arg-139 each bind S-adenosyl-L-methionine.

This sequence belongs to the methyltransferase superfamily. RNA methyltransferase RsmG family.

The protein localises to the cytoplasm. Specifically methylates the N7 position of guanine in position 518 of 16S rRNA. The protein is Ribosomal RNA small subunit methyltransferase G of Pseudarthrobacter chlorophenolicus (strain ATCC 700700 / DSM 12829 / CIP 107037 / JCM 12360 / KCTC 9906 / NCIMB 13794 / A6) (Arthrobacter chlorophenolicus).